The following is a 342-amino-acid chain: NADPH-dependent methylglyoxal reductase GRE2 (342 aa).

NADP(+)-binding positions include 7–12 (GANGFI), Arg32, Lys36, 57–58 (DI), Tyr165, Lys169, Val199, and Ser216. Catalysis depends on Lys169, which acts as the Proton donor. Ser333 carries the phosphoserine modification.

Belongs to the NAD(P)-dependent epimerase/dehydratase family. Dihydroflavonol-4-reductase subfamily. Monomer. The N-terminus is blocked.

The protein localises to the cytoplasm. It localises to the nucleus. It carries out the reaction (S)-lactaldehyde + NADP(+) = methylglyoxal + NADPH + H(+). The catalysed reaction is 3-methylbutanol + NADP(+) = 3-methylbutanal + NADPH + H(+). It catalyses the reaction 2,5-hexanedione + 2 NADPH + 2 H(+) = (2S,5S)-hexanediol + 2 NADP(+). The enzyme catalyses (S)-3-chloro-1-phenyl-1-propanol + NADP(+) = 3-chloro-1-phenyl-1-propanone + NADPH + H(+). Its activity is regulated as follows. Activated by glutathione. Its function is as follows. Catalyzes the irreversible reduction of the cytotoxic compound methylglyoxal (MG, 2-oxopropanal) to (S)-lactaldehyde as an alternative to detoxification of MG by glyoxalase I GLO1. MG is synthesized via a bypath of glycolysis from dihydroxyacetone phosphate and is believed to play a role in cell cycle regulation and stress adaptation. Also catalyzes the reduction of 3-methylbutanal to 3-methylbutanol. Acts as a suppressor of 3-methylbutanol-induced filamentation by modulating the levels of 3-methylbutanal, the signal to which cells respond by filamentation. Also involved in ergosterol metabolism. In Saccharomyces cerevisiae (strain ATCC 204508 / S288c) (Baker's yeast), this protein is NADPH-dependent methylglyoxal reductase GRE2 (GRE2).